A 457-amino-acid chain; its full sequence is Putative F-box protein At3g58860 (457 aa).

The region spanning 6 to 54 (MDLFSKLPDEVISHILSSLPTKEAASTSVLAKKWRYLFAFVPSLDFNDS) is the F-box domain.

The polypeptide is Putative F-box protein At3g58860 (Arabidopsis thaliana (Mouse-ear cress)).